We begin with the raw amino-acid sequence, 139 residues long: Small ribosomal subunit protein bS16 (139 aa).

Residues 85 to 108 form a disordered region; it reads ESKSGKKPAKKATTKEASAKKPTD. Positions 97–108 are enriched in basic and acidic residues; sequence TTKEASAKKPTD.

It belongs to the bacterial ribosomal protein bS16 family.

The chain is Small ribosomal subunit protein bS16 from Leuconostoc mesenteroides subsp. mesenteroides (strain ATCC 8293 / DSM 20343 / BCRC 11652 / CCM 1803 / JCM 6124 / NCDO 523 / NBRC 100496 / NCIMB 8023 / NCTC 12954 / NRRL B-1118 / 37Y).